The following is a 277-amino-acid chain: Phosphate import ATP-binding protein PstB (277 aa).

Positions 31–272 (IEVPGLSLFY…PAKKQTEDYI (242 aa)) constitute an ABC transporter domain. 63–70 (GPSGCGKS) is an ATP binding site.

Belongs to the ABC transporter superfamily. Phosphate importer (TC 3.A.1.7) family. As to quaternary structure, the complex is composed of two ATP-binding proteins (PstB), two transmembrane proteins (PstC and PstA) and a solute-binding protein (PstS).

The protein resides in the cell inner membrane. The catalysed reaction is phosphate(out) + ATP + H2O = ADP + 2 phosphate(in) + H(+). Part of the ABC transporter complex PstSACB involved in phosphate import. Responsible for energy coupling to the transport system. In Pseudomonas putida (Arthrobacter siderocapsulatus), this protein is Phosphate import ATP-binding protein PstB.